The primary structure comprises 196 residues: uncharacterized protein (196 aa).

This is an uncharacterized protein from Sinorhizobium fredii (strain NBRC 101917 / NGR234).